An 869-amino-acid polypeptide reads, in one-letter code: Retrovirus-related Pol polyprotein from type-1 retrotransposable element R2 (869 aa).

Positions 199-475 (IFVFYGRVPS…DLWKYLGVVY (277 aa)) constitute a Reverse transcriptase domain. Positions 601–869 (LYASISHSCK…FNNVTTVVHW (269 aa)) are nucleic acid-binding endonuclease.

It catalyses the reaction DNA(n) + a 2'-deoxyribonucleoside 5'-triphosphate = DNA(n+1) + diphosphate. The chain is Retrovirus-related Pol polyprotein from type-1 retrotransposable element R2 from Bradysia coprophila (Dark-winged fungus gnat).